The primary structure comprises 371 residues: Dual-specificity RNA methyltransferase RlmN (371 aa).

Glutamate 99 serves as the catalytic Proton acceptor. In terms of domain architecture, Radical SAM core spans 106–333 (DDNRATLCIS…AIRRASKGQD (228 aa)). Cysteine 113 and cysteine 338 form a disulfide bridge. 3 residues coordinate [4Fe-4S] cluster: cysteine 120, cysteine 124, and cysteine 127. S-adenosyl-L-methionine is bound by residues 165-166 (GE), serine 197, 219-221 (SLN), and asparagine 295. Cysteine 338 acts as the S-methylcysteine intermediate in catalysis. Residues 345–371 (LTVSPPAQESERNSARPDRSQGKGKHL) form a disordered region. Residues 353-365 (ESERNSARPDRSQ) show a composition bias toward basic and acidic residues.

This sequence belongs to the radical SAM superfamily. RlmN family. It depends on [4Fe-4S] cluster as a cofactor.

It localises to the cytoplasm. The enzyme catalyses adenosine(2503) in 23S rRNA + 2 reduced [2Fe-2S]-[ferredoxin] + 2 S-adenosyl-L-methionine = 2-methyladenosine(2503) in 23S rRNA + 5'-deoxyadenosine + L-methionine + 2 oxidized [2Fe-2S]-[ferredoxin] + S-adenosyl-L-homocysteine. It catalyses the reaction adenosine(37) in tRNA + 2 reduced [2Fe-2S]-[ferredoxin] + 2 S-adenosyl-L-methionine = 2-methyladenosine(37) in tRNA + 5'-deoxyadenosine + L-methionine + 2 oxidized [2Fe-2S]-[ferredoxin] + S-adenosyl-L-homocysteine. Functionally, specifically methylates position 2 of adenine 2503 in 23S rRNA and position 2 of adenine 37 in tRNAs. m2A2503 modification seems to play a crucial role in the proofreading step occurring at the peptidyl transferase center and thus would serve to optimize ribosomal fidelity. This chain is Dual-specificity RNA methyltransferase RlmN, found in Syntrophotalea carbinolica (strain DSM 2380 / NBRC 103641 / GraBd1) (Pelobacter carbinolicus).